We begin with the raw amino-acid sequence, 280 residues long: uncharacterized protein (280 aa).

Belongs to the eukaryotic-type primase small subunit family.

This is an uncharacterized protein from Archaeoglobus fulgidus (strain ATCC 49558 / DSM 4304 / JCM 9628 / NBRC 100126 / VC-16).